We begin with the raw amino-acid sequence, 216 residues long: Pyridoxine/pyridoxamine 5'-phosphate oxidase (216 aa).

Residues 12–15 and K70 each bind substrate; that span reads RREY. FMN contacts are provided by residues 65–70, 80–81, R86, K87, and Q109; these read RVVLLK and YT. 2 residues coordinate substrate: Y127 and R131. FMN contacts are provided by residues 144-145 and W189; that span reads QS. 195–197 is a substrate binding site; sequence RLH. R199 is an FMN binding site.

This sequence belongs to the pyridoxamine 5'-phosphate oxidase family. In terms of assembly, homodimer. The cofactor is FMN.

It carries out the reaction pyridoxamine 5'-phosphate + O2 + H2O = pyridoxal 5'-phosphate + H2O2 + NH4(+). The enzyme catalyses pyridoxine 5'-phosphate + O2 = pyridoxal 5'-phosphate + H2O2. Its pathway is cofactor metabolism; pyridoxal 5'-phosphate salvage; pyridoxal 5'-phosphate from pyridoxamine 5'-phosphate: step 1/1. It functions in the pathway cofactor metabolism; pyridoxal 5'-phosphate salvage; pyridoxal 5'-phosphate from pyridoxine 5'-phosphate: step 1/1. In terms of biological role, catalyzes the oxidation of either pyridoxine 5'-phosphate (PNP) or pyridoxamine 5'-phosphate (PMP) into pyridoxal 5'-phosphate (PLP). The sequence is that of Pyridoxine/pyridoxamine 5'-phosphate oxidase from Blochmanniella pennsylvanica (strain BPEN).